Here is a 298-residue protein sequence, read N- to C-terminus: Isochorismatase domain-containing protein 1 (298 aa).

A Phosphotyrosine modification is found at tyrosine 160. Lysine 279 bears the N6-succinyllysine mark.

This sequence belongs to the isochorismatase family.

This chain is Isochorismatase domain-containing protein 1 (ISOC1), found in Homo sapiens (Human).